A 96-amino-acid chain; its full sequence is Methanol dehydrogenase [cytochrome c] subunit 2 (96 aa).

The first 22 residues, 1–22, serve as a signal peptide directing secretion; that stretch reads MKTTLIAAAIVALSGLAAPALA. C28 and C34 are disulfide-bonded. Residues 45–75 are disordered; sequence IAGSKYDPKHDPKELNKQADSIKQMEERNKK. The span at 50 to 61 shows a compositional bias: basic and acidic residues; the sequence is YDPKHDPKELNK.

Belongs to the methanol dehydrogenase subunit 2 family. In terms of assembly, heterotetramer composed of 2 alpha and 2 beta subunits.

The protein localises to the periplasm. It catalyses the reaction 2 Fe(III)-[cytochrome cL] + a primary alcohol = 2 Fe(II)-[cytochrome cL] + an aldehyde + 2 H(+). Its function is as follows. Catalyzes the oxidation of primary alcohols including methanol. This Methylorubrum extorquens (strain ATCC 14718 / DSM 1338 / JCM 2805 / NCIMB 9133 / AM1) (Methylobacterium extorquens) protein is Methanol dehydrogenase [cytochrome c] subunit 2 (moxI).